A 234-amino-acid chain; its full sequence is Cyclo(L-leucyl-L-leucyl) synthase (234 aa).

Catalysis depends on serine 33, which acts as the Nucleophile. Substrate-binding positions include asparagine 36, 179–183, tyrosine 203, and 208–209; these read YIFAE and SI.

The protein belongs to the CDPS family.

The enzyme catalyses 2 L-leucyl-tRNA(Leu) = cyclo(L-leucyl-L-leucyl) + 2 tRNA(Leu) + 2 H(+). Functionally, it uses activated amino acids in the form of aminoacyl-tRNAs (aa-tRNAs) as substrates to catalyze the ATP-independent formation of cyclodipeptides which are intermediates in diketopiperazine (DKP) biosynthetic pathways. Catalyzes the formation of cyclo(L-Leu-L-Leu) (cLL) from L-leucyl-tRNA(Leu). Can incorporate various nonpolar residues, such as L-phenylalanine, L-leucine and L-methionine, into cyclodipeptides. This chain is Cyclo(L-leucyl-L-leucyl) synthase, found in Photorhabdus laumondii subsp. laumondii (strain DSM 15139 / CIP 105565 / TT01) (Photorhabdus luminescens subsp. laumondii).